The following is a 1072-amino-acid chain: MPKRLDINTILVIGSGPIVIGQAAEFDYSGTQACQSLKEEGYKVILVNSNPATIMTDTATADKVYIEPLTLEFVSRIIRKERPDAILPTLGGQTGLNMAVELAKSGVLEECGVEILGTKLSAIEQAEDRDLFRTLMQELNEPTPPSEIIHNLDEAYGFVKEIGYPVIVRPAFTLGGTGGGICHNEEELIEIVTSGLKHSPVTQCLLEKSIAGCKEIEYEVMRDSNDNAIVVCNMENIDPVGVHTGDSIVVAPSQTLSDREYQMLRNTSLRIIRALGIEGGCNVQLALDPYSFQYYVIEVNPRVSRSSALASKATGYPIAKLAAKIAVGLTLDEIVNPVTQKTYACFEPALDYVVSKIPRWPFDKFESANRTLGTQMKATGEVMSIGRNLEESLLKAVRSLELGIYHLELDHLKELDKETMKKRIIKADDERLFIVAEAIRQGVTKEEINEWCEMDFFFLQKVENIVNMEREVKANVGNMEVLQTAKEMGFSDHYIAAAWNKTEREIYDMRKENNMTPVFKMVDTCAAEFESATPYYYSTYADENESIVTDRKSVVVLGSGPIRIGQGVEFDYATVHSVWAIKEAGYEAIIINNNPETVSTDFSISDKLYFEPLTIEDVMHIIDLEKPEGVIVQFGGQTAINLAAKLEEHGVKILGTSLEDLDRAEDRDKFEAALTKLGIPQPVGKTATTVEQAVAIAEEIGYPVLVRPSYVLGGRAMEIVYRQEELLHYMKNAVKVHADHPVLIDRYMVGKEIEVDAISDGENVFIPGIMEHIERAGVHSGDSIGVYPPQSLSEKLKEQIIEHTIALGKGLNIVGLLNIQFVVFEDQVYVIEVNPRASRTVPFLSKITGVPMANVATKVILGQDLVEQGYGTGYHPEEKEVYVKAPVFSFAKLRSVDTTLGPEMKSTGEVMGKDLTLEKALYKGLVASGINIPTHGSVIITVADKDKEEAMEIAKRFHEIGYNLLATAGTAQSLTEQNIPVQVVNKIDSEDYNLLDIIRQGKAQFVINTLTKGKQPARDGFRIRRESVENGVACLTSLDTTRAILRVLESMTFSAHSMKEITQTKRHEVVHA.

Residues 1–401 (MPKRLDINTI…SLLKAVRSLE (401 aa)) form a carboxyphosphate synthetic domain region. Residues arginine 129, arginine 169, glycine 175, glycine 176, lysine 208, isoleucine 210, glutamate 215, glycine 241, valine 242, histidine 243, glutamine 284, and glutamate 298 each coordinate ATP. One can recognise an ATP-grasp 1 domain in the interval 133-327 (RTLMQELNEP…IAKLAAKIAV (195 aa)). Residues glutamine 284, glutamate 298, and asparagine 300 each contribute to the Mg(2+) site. Glutamine 284, glutamate 298, and asparagine 300 together coordinate Mn(2+). The interval 402-546 (LGIYHLELDH…YSTYADENES (145 aa)) is oligomerization domain. The tract at residues 547 to 929 (IVTDRKSVVV…ALYKGLVASG (383 aa)) is carbamoyl phosphate synthetic domain. The ATP-grasp 2 domain occupies 671-861 (EAALTKLGIP…MANVATKVIL (191 aa)). Residues arginine 707, arginine 746, glutamate 752, glycine 777, valine 778, histidine 779, serine 780, glutamine 820, and glutamate 832 each contribute to the ATP site. Mg(2+) is bound by residues glutamine 820, glutamate 832, and asparagine 834. Mn(2+)-binding residues include glutamine 820, glutamate 832, and asparagine 834. An MGS-like domain is found at 930-1072 (INIPTHGSVI…QTKRHEVVHA (143 aa)). Residues 930 to 1072 (INIPTHGSVI…QTKRHEVVHA (143 aa)) are allosteric domain.

Belongs to the CarB family. As to quaternary structure, composed of two chains; the small (or glutamine) chain promotes the hydrolysis of glutamine to ammonia, which is used by the large (or ammonia) chain to synthesize carbamoyl phosphate. Tetramer of heterodimers (alpha,beta)4. The cofactor is Mg(2+). Mn(2+) is required as a cofactor.

It catalyses the reaction hydrogencarbonate + L-glutamine + 2 ATP + H2O = carbamoyl phosphate + L-glutamate + 2 ADP + phosphate + 2 H(+). It carries out the reaction hydrogencarbonate + NH4(+) + 2 ATP = carbamoyl phosphate + 2 ADP + phosphate + 2 H(+). Its pathway is amino-acid biosynthesis; L-arginine biosynthesis; carbamoyl phosphate from bicarbonate: step 1/1. The protein operates within pyrimidine metabolism; UMP biosynthesis via de novo pathway; (S)-dihydroorotate from bicarbonate: step 1/3. Its function is as follows. Large subunit of the glutamine-dependent carbamoyl phosphate synthetase (CPSase). CPSase catalyzes the formation of carbamoyl phosphate from the ammonia moiety of glutamine, carbonate, and phosphate donated by ATP, constituting the first step of 2 biosynthetic pathways, one leading to arginine and/or urea and the other to pyrimidine nucleotides. The large subunit (synthetase) binds the substrates ammonia (free or transferred from glutamine from the small subunit), hydrogencarbonate and ATP and carries out an ATP-coupled ligase reaction, activating hydrogencarbonate by forming carboxy phosphate which reacts with ammonia to form carbamoyl phosphate. This is Carbamoyl phosphate synthase large chain from Bacillus thuringiensis subsp. konkukian (strain 97-27).